Here is a 343-residue protein sequence, read N- to C-terminus: Dihydroorotase (343 aa).

Zn(2+) contacts are provided by H13 and H15. Residues 15 to 17 (HLR) and N41 each bind substrate. Positions 99, 136, and 174 each coordinate Zn(2+). N6-carboxylysine is present on K99. H136 is a substrate binding site. L219 serves as a coordination point for substrate. A Zn(2+)-binding site is contributed by D247. Residue D247 is part of the active site. Residues H251 and A263 each contribute to the substrate site.

The protein belongs to the metallo-dependent hydrolases superfamily. DHOase family. Class II DHOase subfamily. Homodimer. It depends on Zn(2+) as a cofactor.

It carries out the reaction (S)-dihydroorotate + H2O = N-carbamoyl-L-aspartate + H(+). Its pathway is pyrimidine metabolism; UMP biosynthesis via de novo pathway; (S)-dihydroorotate from bicarbonate: step 3/3. Functionally, catalyzes the reversible cyclization of carbamoyl aspartate to dihydroorotate. The polypeptide is Dihydroorotase (Shewanella baltica (strain OS195)).